Here is a 242-residue protein sequence, read N- to C-terminus: Fibrinolytic enzyme, isozyme C (242 aa).

Positions 1–242 (VIGGTNASPG…YLGWIGDNSR (242 aa)) constitute a Peptidase S1 domain. Cys-29 and Cys-45 are oxidised to a cystine. Catalysis depends on charge relay system residues His-44 and Asp-93. Disulfide bonds link Cys-127/Cys-197, Cys-158/Cys-176, and Cys-187/Cys-219. The active-site Charge relay system is Ser-191.

The protein belongs to the peptidase S1 family.

The chain is Fibrinolytic enzyme, isozyme C from Lumbricus rubellus (Humus earthworm).